The chain runs to 285 residues: ATP phosphoribosyltransferase (285 aa).

It belongs to the ATP phosphoribosyltransferase family. Long subfamily. Mg(2+) serves as cofactor.

Its subcellular location is the cytoplasm. It carries out the reaction 1-(5-phospho-beta-D-ribosyl)-ATP + diphosphate = 5-phospho-alpha-D-ribose 1-diphosphate + ATP. It functions in the pathway amino-acid biosynthesis; L-histidine biosynthesis; L-histidine from 5-phospho-alpha-D-ribose 1-diphosphate: step 1/9. Feedback inhibited by histidine. Functionally, catalyzes the condensation of ATP and 5-phosphoribose 1-diphosphate to form N'-(5'-phosphoribosyl)-ATP (PR-ATP). Has a crucial role in the pathway because the rate of histidine biosynthesis seems to be controlled primarily by regulation of HisG enzymatic activity. This is ATP phosphoribosyltransferase from Streptomyces avermitilis (strain ATCC 31267 / DSM 46492 / JCM 5070 / NBRC 14893 / NCIMB 12804 / NRRL 8165 / MA-4680).